Here is a 275-residue protein sequence, read N- to C-terminus: Putative Ig-like V-type domain-containing protein FPV055 (275 aa).

2 Ig-like V-type domains span residues 25 to 122 (KTFV…MNLG) and 140 to 239 (PRRS…KSLS).

The protein is Putative Ig-like V-type domain-containing protein FPV055 of Fowlpox virus (strain NVSL) (FPV).